The following is a 471-amino-acid chain: Cysteine--tRNA ligase (471 aa).

Cysteine 29 provides a ligand contact to Zn(2+). A 'HIGH' region motif is present at residues 31–41; the sequence is PTVYNYIHIGN. Residues cysteine 209, histidine 234, and glutamate 238 each coordinate Zn(2+). Residues 266-270 carry the 'KMSKS' region motif; it reads KMSKS. ATP is bound at residue lysine 269.

It belongs to the class-I aminoacyl-tRNA synthetase family. Monomer. Zn(2+) is required as a cofactor.

Its subcellular location is the cytoplasm. The catalysed reaction is tRNA(Cys) + L-cysteine + ATP = L-cysteinyl-tRNA(Cys) + AMP + diphosphate. The sequence is that of Cysteine--tRNA ligase from Listeria monocytogenes serovar 1/2a (strain ATCC BAA-679 / EGD-e).